Here is a 327-residue protein sequence, read N- to C-terminus: tRNA uridine(34) hydroxylase (327 aa).

Residues 123-217 enclose the Rhodanese domain; it reads SDPEVLLVDT…YLEEVKQEES (95 aa). Cys-177 (cysteine persulfide intermediate) is an active-site residue.

Belongs to the TrhO family.

It catalyses the reaction uridine(34) in tRNA + AH2 + O2 = 5-hydroxyuridine(34) in tRNA + A + H2O. Its function is as follows. Catalyzes oxygen-dependent 5-hydroxyuridine (ho5U) modification at position 34 in tRNAs. The sequence is that of tRNA uridine(34) hydroxylase from Shewanella piezotolerans (strain WP3 / JCM 13877).